The following is a 210-amino-acid chain: CKLF-like MARVEL transmembrane domain-containing protein 2B (210 aa).

The next 4 membrane-spanning stretches (helical) occupy residues 35-55 (FWAQ…IAAM), 65-85 (PIVI…FFLY), 103-123 (LMND…ALEA), and 127-147 (LPVP…ISII). Residues 35–157 (FWAQGHAECK…DLCLQRRQFK (123 aa)) form the MARVEL domain.

This sequence belongs to the chemokine-like factor family.

The protein localises to the membrane. The polypeptide is CKLF-like MARVEL transmembrane domain-containing protein 2B (Cmtm2b) (Mus musculus (Mouse)).